Reading from the N-terminus, the 193-residue chain is Naphthalene 1,2-dioxygenase system, small oxygenase component (193 aa).

This sequence belongs to the bacterial ring-hydroxylating dioxygenase beta subunit family. In terms of assembly, the naphthalene dioxygenase (NDO) multicomponent enzyme system is composed of an electron transfer component and a dioxygenase component (iron sulfur protein (ISP)). The electron transfer component is composed of a ferredoxin reductase (NdoR) and a ferredoxin (NdoA), and the dioxygenase component is formed of a heterohexamer (trimer of heterodimers) of three large alpha subunits (NdoB) and three small beta subunits (NdoC).

Its pathway is aromatic compound metabolism; naphthalene degradation. Functionally, component of the naphthalene dioxygenase (NDO) multicomponent enzyme system which catalyzes the incorporation of both atoms of molecular oxygen into naphthalene to form cis-(1R,2S)-dihydroxy-1,2-dihydronaphthalene. The beta subunit seems to have a structural role in the holoenzyme. The sequence is that of Naphthalene 1,2-dioxygenase system, small oxygenase component from Pseudomonas aeruginosa.